We begin with the raw amino-acid sequence, 359 residues long: MEQQNKRGLKRKALLGGVLGLGGLAMAGCEVAPPGGVLGDFLRMGWPDGITPEAVAMGNFWSWVWVAAWIIGIIMWGLFLTAIFAWGAKRAEKRGEGEFPKQLQYNVPLELVLTIVPIIIVMVLFFFTVQTQDKVTALDKNPEVTVDVTAYQWNWKFGYSEIDGSLAPGGQDYQGSDPERQAAAEASKKDPSGDNPIHGNSKSDVSYLEFNRIETLGTTDEIPVMVLPVNTPIEFNLASADVAHSFWVPEFLFKRDAYAHPEANKSQRVFQIEEITEEGAFVGRCAEMCGTYHAMMNFELRVVDRDSFAEYISFRDSNPDATNAQALEHIGQAPYATSTSPFVSDRTATRDGENTQSNA.

The signal sequence occupies residues 1-28 (MEQQNKRGLKRKALLGGVLGLGGLAMAG). The S-diacylglycerol cysteine moiety is linked to residue Cys29. 2 helical membrane passes run 64–84 (VWVA…TAIF) and 107–127 (VPLE…LFFF). The interval 168–203 (PGGQDYQGSDPERQAAAEASKKDPSGDNPIHGNSKS) is disordered. Over residues 177-192 (DPERQAAAEASKKDPS) the composition is skewed to basic and acidic residues. The Cu cation site is built by His244, Cys285, Glu287, Cys289, His293, and Met296. Residues 335 to 359 (YATSTSPFVSDRTATRDGENTQSNA) form a disordered region.

In terms of assembly, associates with subunits I, III and IV to form cytochrome c oxidase. The 4 subunit cytochrome c oxidase forms a supercomplex with the menaquinol-cytochrome c reductase complex (cytochrome bc1). Binuclear copper center (CuA) is required as a cofactor.

The protein localises to the cell membrane. It carries out the reaction 4 Fe(II)-[cytochrome c] + O2 + 8 H(+)(in) = 4 Fe(III)-[cytochrome c] + 2 H2O + 4 H(+)(out). Its function is as follows. Subunits I and II form the functional core of the enzyme complex. Electrons originating in cytochrome c are transferred via heme a and Cu(A) to the binuclear center formed by heme a3 and Cu(B). The protein is Cytochrome c oxidase subunit 2 (ctaC) of Corynebacterium glutamicum (strain ATCC 13032 / DSM 20300 / JCM 1318 / BCRC 11384 / CCUG 27702 / LMG 3730 / NBRC 12168 / NCIMB 10025 / NRRL B-2784 / 534).